A 122-amino-acid polypeptide reads, in one-letter code: Large ribosomal subunit protein uL14 (122 aa).

The protein belongs to the universal ribosomal protein uL14 family. In terms of assembly, part of the 50S ribosomal subunit. Forms a cluster with proteins L3 and L19. In the 70S ribosome, L14 and L19 interact and together make contacts with the 16S rRNA in bridges B5 and B8.

Functionally, binds to 23S rRNA. Forms part of two intersubunit bridges in the 70S ribosome. This chain is Large ribosomal subunit protein uL14, found in Mycobacteroides abscessus (strain ATCC 19977 / DSM 44196 / CCUG 20993 / CIP 104536 / JCM 13569 / NCTC 13031 / TMC 1543 / L948) (Mycobacterium abscessus).